A 615-amino-acid chain; its full sequence is Elongation factor 4 (615 aa).

The tr-type G domain occupies Ser-14 to Ser-200. GTP is bound by residues Asp-26 to Thr-31 and Asn-147 to Asp-150.

This sequence belongs to the TRAFAC class translation factor GTPase superfamily. Classic translation factor GTPase family. LepA subfamily.

The protein localises to the cell membrane. The catalysed reaction is GTP + H2O = GDP + phosphate + H(+). Functionally, required for accurate and efficient protein synthesis under certain stress conditions. May act as a fidelity factor of the translation reaction, by catalyzing a one-codon backward translocation of tRNAs on improperly translocated ribosomes. Back-translocation proceeds from a post-translocation (POST) complex to a pre-translocation (PRE) complex, thus giving elongation factor G a second chance to translocate the tRNAs correctly. Binds to ribosomes in a GTP-dependent manner. The chain is Elongation factor 4 from Corynebacterium efficiens (strain DSM 44549 / YS-314 / AJ 12310 / JCM 11189 / NBRC 100395).